A 211-amino-acid polypeptide reads, in one-letter code: MHFLTQELSFPNTNESTRDGLLAIGGDLSTQRLLLAYENGIFPWFEEGEPIMWWSPRQRMVLFFDALVVSHSMRNVINKNIFKVTFNKAFREVIQNCQSVKREGQHGTWITNEMIESYCKLHELGKAISVEIWQNDTLVGGLYGVDMFPVFCGESMFSKVSNASKMAFISLADYLKTNHYNLLDCQIYNDHLNSLGCREIPRDEFLKFLKK.

It belongs to the L/F-transferase family.

It is found in the cytoplasm. It carries out the reaction N-terminal L-lysyl-[protein] + L-leucyl-tRNA(Leu) = N-terminal L-leucyl-L-lysyl-[protein] + tRNA(Leu) + H(+). The enzyme catalyses N-terminal L-arginyl-[protein] + L-leucyl-tRNA(Leu) = N-terminal L-leucyl-L-arginyl-[protein] + tRNA(Leu) + H(+). It catalyses the reaction L-phenylalanyl-tRNA(Phe) + an N-terminal L-alpha-aminoacyl-[protein] = an N-terminal L-phenylalanyl-L-alpha-aminoacyl-[protein] + tRNA(Phe). In terms of biological role, functions in the N-end rule pathway of protein degradation where it conjugates Leu, Phe and, less efficiently, Met from aminoacyl-tRNAs to the N-termini of proteins containing an N-terminal arginine or lysine. In Flavobacterium psychrophilum (strain ATCC 49511 / DSM 21280 / CIP 103535 / JIP02/86), this protein is Leucyl/phenylalanyl-tRNA--protein transferase.